The chain runs to 467 residues: Membrane-bound acylglycerophosphatidylinositol O-acyltransferase mboat7 (467 aa).

The Cytoplasmic segment spans residues 1 to 5 (MSPDE). Residues 6–22 (LVYLGILAATIPVGFLF) traverse the membrane as a helical segment. Residues 23–33 (RYLSPPVKQGA) are Lumenal-facing. A helical membrane pass occupies residues 34–57 (ALLLGLIISIATCGIHTLHSLCTV). Topologically, residues 58–73 (LGTWIIIKINWRSAPA) are cytoplasmic. A helical transmembrane segment spans residues 74–93 (LSLAWTFLYLLFFRLVTWFG). Over 94 to 193 (LPQPTPFANA…LPGKEPCLQR (100 aa)) the chain is Lumenal. Residues 194 to 211 (LKMVPVYGLLFIAVNSVF) traverse the membrane as a helical segment. The Cytoplasmic segment spans residues 212–230 (PLSYVRTEDFLEHNYFYRF). A helical membrane pass occupies residues 231 to 260 (FYMVAIFFVFRMRFYSAWCGAEAGCISAGL). The Lumenal segment spans residues 261–421 (GCYPQGALSK…LKASDTISYW (161 aa)). Residue asparagine 316 is glycosylated (N-linked (GlcNAc...) asparagine). The chain crosses the membrane as a helical span at residues 422–442 (SSIYFVIHIIAIVCIAVGQFM). The Cytoplasmic portion of the chain corresponds to 443-467 (KGGRKREKRERGEGEKEDAVREKAE). A disordered region spans residues 447-467 (KREKRERGEGEKEDAVREKAE). Residues 451–467 (RERGEGEKEDAVREKAE) show a composition bias toward basic and acidic residues.

The protein belongs to the membrane-bound acyltransferase family.

Its subcellular location is the endoplasmic reticulum membrane. It carries out the reaction a 1-acyl-sn-glycero-3-phospho-(1D-myo-inositol) + (5Z,8Z,11Z,14Z)-eicosatetraenoyl-CoA = a 1-acyl-2-(5Z,8Z,11Z,14Z-eicosatetraenoyl)-sn-glycero-3-phospho-(1D-myo-inositol) + CoA. It catalyses the reaction (5Z,8Z,11Z,14Z)-eicosatetraenoyl-CoA + 1-hexadecanoyl-sn-glycero-3-phosphocholine = 1-hexadecanoyl-2-(5Z,8Z,11Z,14Z-eicosatetraenoyl)-sn-glycero-3-phosphocholine + CoA. The catalysed reaction is a 1-acyl-sn-glycero-3-phospho-(1D-myo-inositol) + an acyl-CoA = a 1,2-diacyl-sn-glycero-3-phospho-(1D-myo-inositol) + CoA. The enzyme catalyses 1-octadecanoyl-sn-glycero-3-phospho-(1D-myo-inositol) + (5Z,8Z,11Z,14Z)-eicosatetraenoyl-CoA = 1-octadecanoyl-2-(5Z,8Z,11Z,14Z-eicosatetraenoyl)-sn-glycero-3-phospho-(1D-myo-inositol) + CoA. It functions in the pathway lipid metabolism; phospholipid metabolism. In terms of biological role, acyltransferase which catalyzes the transfer of an acyl group from an acyl-CoA to a lysophosphatidylinositol (1-acylglycerophosphatidylinositol or LPI) leading to the production of a phosphatidylinositol (1,2-diacyl-sn-glycero-3-phosphoinositol or PI) and participates in the reacylation step of the phospholipid remodeling pathway also known as the Lands cycle. Prefers arachidonoyl-CoA as the acyl donor, thus contributing to the regulation of free levels arachidonic acid in cell. The sequence is that of Membrane-bound acylglycerophosphatidylinositol O-acyltransferase mboat7 (mboat7) from Danio rerio (Zebrafish).